The sequence spans 476 residues: Sulfate adenylyltransferase subunit 1 (476 aa).

The tr-type G domain maps to 24 to 238 (KSLLRFLTCG…ELLEYVDIDR (215 aa)). The G1 stretch occupies residues 33–40 (GSVDDGKS). GTP is bound at residue 33 to 40 (GSVDDGKS). Residues 91–95 (GITID) form a G2 region. A G3 region spans residues 112 to 115 (DTPG). GTP contacts are provided by residues 112-116 (DTPGH) and 167-170 (NKMD). The tract at residues 167–170 (NKMD) is G4. Residues 205 to 207 (SAL) form a G5 region.

This sequence belongs to the TRAFAC class translation factor GTPase superfamily. Classic translation factor GTPase family. CysN/NodQ subfamily. In terms of assembly, heterodimer composed of CysD, the smaller subunit, and CysN.

The enzyme catalyses sulfate + ATP + H(+) = adenosine 5'-phosphosulfate + diphosphate. It functions in the pathway sulfur metabolism; hydrogen sulfide biosynthesis; sulfite from sulfate: step 1/3. Its function is as follows. With CysD forms the ATP sulfurylase (ATPS) that catalyzes the adenylation of sulfate producing adenosine 5'-phosphosulfate (APS) and diphosphate, the first enzymatic step in sulfur assimilation pathway. APS synthesis involves the formation of a high-energy phosphoric-sulfuric acid anhydride bond driven by GTP hydrolysis by CysN coupled to ATP hydrolysis by CysD. The polypeptide is Sulfate adenylyltransferase subunit 1 (Vibrio cholerae serotype O1 (strain M66-2)).